The following is a 204-amino-acid chain: UPF0637 protein LMHCC_1566 (204 aa).

Belongs to the UPF0637 family.

The polypeptide is UPF0637 protein LMHCC_1566 (Listeria monocytogenes serotype 4a (strain HCC23)).